A 208-amino-acid polypeptide reads, in one-letter code: Large ribosomal subunit protein uL3 (208 aa).

Residues 116-148 (GFQGVIKRHGQSRGPMAHGSRYHRRPGSMGPVA) are disordered.

Belongs to the universal ribosomal protein uL3 family. As to quaternary structure, part of the 50S ribosomal subunit. Forms a cluster with proteins L14 and L19.

In terms of biological role, one of the primary rRNA binding proteins, it binds directly near the 3'-end of the 23S rRNA, where it nucleates assembly of the 50S subunit. The polypeptide is Large ribosomal subunit protein uL3 (Streptococcus agalactiae serotype Ia (strain ATCC 27591 / A909 / CDC SS700)).